A 256-amino-acid chain; its full sequence is Deoxyribose-phosphate aldolase (256 aa).

Asp102 functions as the Proton donor/acceptor in the catalytic mechanism. The active-site Schiff-base intermediate with acetaldehyde is the Lys165. The active-site Proton donor/acceptor is the Lys197.

This sequence belongs to the DeoC/FbaB aldolase family. DeoC type 2 subfamily.

It is found in the cytoplasm. It catalyses the reaction 2-deoxy-D-ribose 5-phosphate = D-glyceraldehyde 3-phosphate + acetaldehyde. It participates in carbohydrate degradation; 2-deoxy-D-ribose 1-phosphate degradation; D-glyceraldehyde 3-phosphate and acetaldehyde from 2-deoxy-alpha-D-ribose 1-phosphate: step 2/2. Catalyzes a reversible aldol reaction between acetaldehyde and D-glyceraldehyde 3-phosphate to generate 2-deoxy-D-ribose 5-phosphate. The protein is Deoxyribose-phosphate aldolase of Shewanella sp. (strain ANA-3).